A 1881-amino-acid chain; its full sequence is Endoribonuclease Dicer-S (1881 aa).

The Helicase ATP-binding domain occupies 41–217; the sequence is LLEAALDHNI…DLEEKIQNLE (177 aa). ATP is bound at residue 54–61; sequence LNSGSGKT. The DECH box motif lies at 165–168; the sequence is DECH. The 170-residue stretch at 425-594 folds into the Helicase C-terminal domain; it reads SFPSPFTNIL…SMDCGNTESE (170 aa). The Dicer dsRNA-binding fold domain maps to 622–714; sequence AIGHINRYCA…MPVGKETVKY (93 aa). The PAZ domain occupies 887 to 1034; that stretch reads KFVEDIEKSE…LVPELCAIHP (148 aa). RNase III domains lie at 1249-1380 and 1625-1783; these read TSDI…ETSG and FENF…MDSG. Mg(2+)-binding residues include E1293, D1371, E1374, E1664, D1769, and E1772. In terms of domain architecture, DRBM spans 1808–1873; sequence VPRSPVRELL…ARRALRSLKA (66 aa).

The protein belongs to the helicase family. Dicer subfamily. Component of the RISC loading complex (RLC), or micro-RNA (miRNA) loading complex (miRLC), which is composed of dicer1, ago2 and tarbp2; dicer1 and tarbp2 are required to process precursor miRNAs (pre-miRNAs) to mature miRNAs and then load them onto ago2. Note that the trimeric RLC/miRLC is also referred to as RISC. Mg(2+) is required as a cofactor. Requires Mn(2+) as cofactor.

The protein localises to the cytoplasm. The catalysed reaction is Endonucleolytic cleavage to 5'-phosphomonoester.. Its function is as follows. Double-stranded RNA (dsRNA) endoribonuclease playing a central role in short dsRNA-mediated post-transcriptional gene silencing. Cleaves naturally occurring long dsRNAs and short hairpin pre-microRNAs (miRNA) into fragments of twenty-one to twenty-three nucleotides with 3' overhang of two nucleotides, producing respectively short interfering RNAs (siRNA) and mature microRNAs. SiRNAs and miRNAs serve as guide to direct the RNA-induced silencing complex (RISC) to complementary RNAs to degrade them or prevent their translation. Gene silencing mediated by siRNAs, also called RNA interference, controls the elimination of transcripts from mobile and repetitive DNA elements of the genome but also the degradation of exogenous RNA of viral origin for instance. The miRNA pathway on the other side is a mean to specifically regulate the expression of target genes. During embryonic development, at the left-right organizer, post-transcriptionally regulates the expression of dand5 in flow sensor cells. In post-flow stages, acts along with Bicc1 to repress dand5 mRNA translation and decay. Decreased Dand5 expression lifts repression of Nodal and defines leftness by induction of the lateral plate mesoderm Nodal signaling cascade. This is Endoribonuclease Dicer-S (dicer1.S) from Xenopus laevis (African clawed frog).